Consider the following 49-residue polypeptide: Sporulation protein YjcZ (49 aa).

Residues 29–49 form a helical membrane-spanning segment; that stretch reads STFVLLVVLFILLIIVGASFF.

Belongs to the SscA family.

The protein resides in the membrane. This chain is Sporulation protein YjcZ (yjcZ), found in Bacillus subtilis (strain 168).